The primary structure comprises 205 residues: FMN-dependent NADH:quinone oxidoreductase (205 aa).

Residues serine 10, 16–18, and 96–99 each bind FMN; these read SHS and MYNF.

This sequence belongs to the azoreductase type 1 family. Homodimer. It depends on FMN as a cofactor.

It catalyses the reaction 2 a quinone + NADH + H(+) = 2 a 1,4-benzosemiquinone + NAD(+). It carries out the reaction N,N-dimethyl-1,4-phenylenediamine + anthranilate + 2 NAD(+) = 2-(4-dimethylaminophenyl)diazenylbenzoate + 2 NADH + 2 H(+). Functionally, quinone reductase that provides resistance to thiol-specific stress caused by electrophilic quinones. In terms of biological role, also exhibits azoreductase activity. Catalyzes the reductive cleavage of the azo bond in aromatic azo compounds to the corresponding amines. The protein is FMN-dependent NADH:quinone oxidoreductase of Nostoc punctiforme (strain ATCC 29133 / PCC 73102).